Consider the following 142-residue polypeptide: uncharacterized protein (142 aa).

The 120-residue stretch at Met1 to Asp120 folds into the N-acetyltransferase domain.

The protein belongs to the acetyltransferase family.

This is an uncharacterized protein from Streptococcus pyogenes serotype M3 (strain ATCC BAA-595 / MGAS315).